The chain runs to 105 residues: MDKFYNYNSSLHQVLLNLKVKPNSKQNLISNFVIINNIPYLKLSIKATPEKGKANEEIINYLAKAWKLSRSNIEIIKGHTHSVKTILIKNINEDYLNFIINSYIR.

This sequence belongs to the UPF0235 family.

This chain is UPF0235 protein A1C_06510, found in Rickettsia akari (strain Hartford).